Consider the following 274-residue polypeptide: tRNA pseudouridine synthase A (274 aa).

The Nucleophile role is filled by Asp52. Tyr110 lines the substrate pocket.

It belongs to the tRNA pseudouridine synthase TruA family. In terms of assembly, homodimer.

It carries out the reaction uridine(38/39/40) in tRNA = pseudouridine(38/39/40) in tRNA. Formation of pseudouridine at positions 38, 39 and 40 in the anticodon stem and loop of transfer RNAs. In Ralstonia nicotianae (strain ATCC BAA-1114 / GMI1000) (Ralstonia solanacearum), this protein is tRNA pseudouridine synthase A.